We begin with the raw amino-acid sequence, 795 residues long: Protocadherin beta-5 (795 aa).

The signal sequence occupies residues 1 to 30 (METALAKTPQKRQVMFLAILLLLWEAGSEA). The Extracellular segment spans residues 31–689 (VRYSIPEETE…AQADSLTVYL (659 aa)). Cadherin domains are found at residues 35–133 (IPEE…APEF), 138–242 (MLLK…APEF), 247–346 (YEVQ…APEL), 351–450 (LSSP…APAF), and 455–560 (YTLF…SPFV). Asn-169 carries an N-linked (GlcNAc...) asparagine glycan. Lys-296 bears the N6-acetyllysine mark. 2 N-linked (GlcNAc...) asparagine glycosylation sites follow: Asn-417 and Asn-435. Asn-566 carries an N-linked (GlcNAc...) asparagine glycan. The Cadherin 6 domain occupies 567 to 670 (GSAPCTELVP…LVDGFSQPYL (104 aa)). A helical membrane pass occupies residues 690 to 710 (VVALASVSSLFLFSVLLFVAV). Topologically, residues 711-795 (RLCRRSRAAP…AAFRNSFGLN (85 aa)) are cytoplasmic.

It localises to the cell membrane. Functionally, potential calcium-dependent cell-adhesion protein. May be involved in the establishment and maintenance of specific neuronal connections in the brain. The chain is Protocadherin beta-5 (PCDHB5) from Homo sapiens (Human).